We begin with the raw amino-acid sequence, 309 residues long: Methionyl-tRNA formyltransferase (309 aa).

Residue 110–113 (SLLP) coordinates (6S)-5,6,7,8-tetrahydrofolate. The segment at 289–309 (KRMAATDWARGSRIEQGERLK) is disordered. Over residues 298–309 (RGSRIEQGERLK) the composition is skewed to basic and acidic residues.

The protein belongs to the Fmt family.

The catalysed reaction is L-methionyl-tRNA(fMet) + (6R)-10-formyltetrahydrofolate = N-formyl-L-methionyl-tRNA(fMet) + (6S)-5,6,7,8-tetrahydrofolate + H(+). Attaches a formyl group to the free amino group of methionyl-tRNA(fMet). The formyl group appears to play a dual role in the initiator identity of N-formylmethionyl-tRNA by promoting its recognition by IF2 and preventing the misappropriation of this tRNA by the elongation apparatus. The chain is Methionyl-tRNA formyltransferase from Saccharopolyspora erythraea (strain ATCC 11635 / DSM 40517 / JCM 4748 / NBRC 13426 / NCIMB 8594 / NRRL 2338).